The chain runs to 327 residues: Nocardicin C-9' epimerase (327 aa).

At Lys-43 the chain carries N6-(pyridoxal phosphate)lysine.

The protein belongs to the ACC deaminase/D-cysteine desulfhydrase family. It depends on pyridoxal 5'-phosphate as a cofactor.

The enzyme catalyses isonocardicin C = nocardicin C. It carries out the reaction isonocardicin A = nocardicin A. It participates in antibiotic biosynthesis. Its function is as follows. Involved in the biosynthesis of the beta-lactam antibiotic nocardicin A. Catalyzes the interconversion of the nocardicin homoseryl side chain in both nocardicin A with isonocardicin A, and nocardicin C with isonocardicin C. This is Nocardicin C-9' epimerase from Nocardia uniformis subsp. tsuyamanensis.